A 262-amino-acid chain; its full sequence is GTP cyclohydrolase 1 type 2 homolog (262 aa).

Positions 68, 69, 108, 226, and 229 each coordinate a divalent metal cation.

The protein belongs to the GTP cyclohydrolase I type 2/NIF3 family. Homohexamer.

The chain is GTP cyclohydrolase 1 type 2 homolog from Ureaplasma parvum serovar 3 (strain ATCC 700970).